The chain runs to 516 residues: MSVWVALALLGMCVSCTHVPPPRALIVSKEPPPALDSAPRPAIPEAVPLPSPVEEEIAGRLPPAPAAAPERVPESSQEREQKPESSKPQVVEPVSLASPVKPREAGSVPDVLPVPEVSSPHVAPPAPPAPTAPRPHRPSPPPVSPSASKPKQRAVPPSPPPASEPPREAEVQAEPEPAEDSPRAMVPEEPPEDEVPRVSRAVQLAVGQKLEVLYPGEGWVYVGEHTAQPGLRYHQRKLEESHSLFTFSAEREGDFVLAFSYFDVFRGDFVSDALAVKVVPKREGLARVVRAPEYRRTVSSPPDTVVSELSPAGTGTERRAEESGTSGSQRAAAHTGAPVRQDQTDTAVAEKAQHGTPRPDEKKDREPTVGGRDPVPSDAVAQGVSERYSPRKISPASQPSAPSAAPIEAHVPASAHKEGQEKRDHLAEARQFCAQGNARDALASLGDFFAQFPSHERMDEAWFLRGQAYEINGAQRNVRLALEAYKTILERFPHSPYWKKADERARFIKNFFIKIS.

The N-terminal stretch at 1-17 is a signal peptide; sequence MSVWVALALLGMCVSCT. Disordered regions lie at residues 29 to 197 and 296 to 426; these read KEPP…EVPR and RTVS…RDHL. Positions 71-85 are enriched in basic and acidic residues; the sequence is RVPESSQEREQKPES. Residues 122–144 show a composition bias toward pro residues; it reads VAPPAPPAPTAPRPHRPSPPPVS. A compositionally biased stretch (low complexity) spans 145–155; sequence PSASKPKQRAV. The span at 351–367 shows a compositional bias: basic and acidic residues; sequence KAQHGTPRPDEKKDREP. Low complexity predominate over residues 394 to 406; it reads SPASQPSAPSAAP. Basic and acidic residues predominate over residues 415 to 426; sequence AHKEGQEKRDHL.

This is an uncharacterized protein from Treponema pallidum (strain Nichols).